The primary structure comprises 148 residues: 6,7-dimethyl-8-ribityllumazine synthase (148 aa).

5-amino-6-(D-ribitylamino)uracil is bound by residues Phe-13, 44–46, and 73–75; these read ALE and MVI. 78–79 is a binding site for (2S)-2-hydroxy-3-oxobutyl phosphate; sequence ET. Residue His-81 is the Proton donor of the active site. Residue Asn-106 participates in 5-amino-6-(D-ribitylamino)uracil binding. Position 120 (Arg-120) interacts with (2S)-2-hydroxy-3-oxobutyl phosphate.

It belongs to the DMRL synthase family.

It catalyses the reaction (2S)-2-hydroxy-3-oxobutyl phosphate + 5-amino-6-(D-ribitylamino)uracil = 6,7-dimethyl-8-(1-D-ribityl)lumazine + phosphate + 2 H2O + H(+). It functions in the pathway cofactor biosynthesis; riboflavin biosynthesis; riboflavin from 2-hydroxy-3-oxobutyl phosphate and 5-amino-6-(D-ribitylamino)uracil: step 1/2. Functionally, catalyzes the formation of 6,7-dimethyl-8-ribityllumazine by condensation of 5-amino-6-(D-ribitylamino)uracil with 3,4-dihydroxy-2-butanone 4-phosphate. This is the penultimate step in the biosynthesis of riboflavin. This is 6,7-dimethyl-8-ribityllumazine synthase from Agrobacterium fabrum (strain C58 / ATCC 33970) (Agrobacterium tumefaciens (strain C58)).